Consider the following 253-residue polypeptide: 5'/3'-nucleotidase SurE (253 aa).

A divalent metal cation contacts are provided by Asp-8, Asp-9, Ser-39, and Asn-92.

It belongs to the SurE nucleotidase family. It depends on a divalent metal cation as a cofactor.

The protein resides in the cytoplasm. The catalysed reaction is a ribonucleoside 5'-phosphate + H2O = a ribonucleoside + phosphate. It catalyses the reaction a ribonucleoside 3'-phosphate + H2O = a ribonucleoside + phosphate. It carries out the reaction [phosphate](n) + H2O = [phosphate](n-1) + phosphate + H(+). Nucleotidase with a broad substrate specificity as it can dephosphorylate various ribo- and deoxyribonucleoside 5'-monophosphates and ribonucleoside 3'-monophosphates with highest affinity to 3'-AMP. Also hydrolyzes polyphosphate (exopolyphosphatase activity) with the preference for short-chain-length substrates (P20-25). Might be involved in the regulation of dNTP and NTP pools, and in the turnover of 3'-mononucleotides produced by numerous intracellular RNases (T1, T2, and F) during the degradation of various RNAs. This is 5'/3'-nucleotidase SurE from Sodalis glossinidius (strain morsitans).